We begin with the raw amino-acid sequence, 153 residues long: Prostaglandin E synthase (153 aa).

Over 1–13 the chain is Lumenal; sequence MPPSGLELMNGQV. Residues 14–42 traverse the membrane as a helical segment; it reads LPAFLLCSALLVIKMYVVAVITGQVRLRK. Arg39 lines the glutathione pocket. Residues 43-61 lie on the Cytoplasmic side of the membrane; it reads KAFANPEDAQRHGGLQYCR. A helical membrane pass occupies residues 62 to 91; sequence NDPDVERCLRAHRNDMETIYPFLFLGFVYS. 74-78 contributes to the glutathione binding site; it reads RNDME. Residues 92–96 lie on the Lumenal side of the membrane; sequence FLGPN. A helical transmembrane segment spans residues 97–120; sequence PFVARMHFLVFFLGRMVHTVAYLG. Residues His114 and Tyr118 each coordinate glutathione. The Cytoplasmic segment spans residues 121-124; it reads KLRA. A helical transmembrane segment spans residues 125 to 153; the sequence is PTRSLAYTLAQLPCASMALQIVWEAARHL. Residue 127 to 131 coordinates glutathione; the sequence is RSLAY.

It belongs to the MAPEG family. Homotrimer. Glutathione serves as cofactor.

The protein localises to the membrane. The protein resides in the cytoplasm. It localises to the perinuclear region. It carries out the reaction prostaglandin H2 = prostaglandin E2. The catalysed reaction is 2-glyceryl-prostaglandin H2 = 2-glyceryl-prostaglandin E2. The enzyme catalyses prostaglandin G2 = (15S)-15-hydroperoxy-prostaglandin E2. It catalyses the reaction 1-chloro-2,4-dinitrobenzene + glutathione = 2,4-dinitrophenyl-S-glutathione + chloride + H(+). It carries out the reaction (5S)-hydroperoxy-(6E,8Z,11Z,14Z)-eicosatetraenoate + 2 glutathione = (5S)-hydroxy-(6E,8Z,11Z,14Z)-eicosatetraenoate + glutathione disulfide + H2O. It participates in lipid metabolism; prostaglandin biosynthesis. Functionally, terminal enzyme of the cyclooxygenase (COX)-2-mediated prostaglandin E2 (PGE2) biosynthetic pathway. Catalyzes the glutathione-dependent oxidoreduction of prostaglandin endoperoxide H2 (PGH2) to prostaglandin E2 (PGE2) in response to inflammatory stimuli. Plays a key role in inflammation response, fever and pain. Also catalyzes the oxidoreduction of endocannabinoids into prostaglandin glycerol esters and PGG2 into 15-hydroperoxy-PGE2. In addition, displays low glutathione transferase and glutathione-dependent peroxidase activities, toward 1-chloro-2,4-dinitrobenzene and 5-hydroperoxyicosatetraenoic acid (5-HPETE), respectively. This is Prostaglandin E synthase (PTGES) from Bos taurus (Bovine).